A 212-amino-acid polypeptide reads, in one-letter code: Thymidylate kinase (212 aa).

10–17 (GPEGAGKT) is a binding site for ATP.

This sequence belongs to the thymidylate kinase family.

The enzyme catalyses dTMP + ATP = dTDP + ADP. In terms of biological role, phosphorylation of dTMP to form dTDP in both de novo and salvage pathways of dTTP synthesis. This is Thymidylate kinase from Bacillus pumilus (strain SAFR-032).